The chain runs to 123 residues: Cell division protein SepF (123 aa).

It belongs to the SepF family. In terms of assembly, homodimer. Interacts with FtsZ.

The protein localises to the cytoplasm. Its function is as follows. Cell division protein that is part of the divisome complex and is recruited early to the Z-ring. Probably stimulates Z-ring formation, perhaps through the cross-linking of FtsZ protofilaments. Its function overlaps with FtsA. The polypeptide is Cell division protein SepF (Tropheryma whipplei (strain TW08/27) (Whipple's bacillus)).